Consider the following 556-residue polypeptide: Single-strand DNA-binding protein (556 aa).

Disordered regions lie at residues 1-95 and 527-556; these read MDPK…SEVE and FVRPEPALPPISDSRRTYESRPRGPTVNSL. Composition is skewed to polar residues over residues 10 to 25 and 36 to 51; these read ENITETAAGNVETSDF and VNSTGMSEIDMTGSQE. Basic and acidic residues-rich tracts occupy residues 52 to 73 and 539 to 548; these read TPEHNMHGSPTHTDDLGPRLDA and DSRRTYESRP.

As to quaternary structure, interacts with host VIP2 that promotes T-DNA integration into the host genome. Forms a complex made of virE2 and host proteins VIP1 and VBF. Forms heterodimers with the chaperone protein virE1 that prevent virE2 anarchic homopolymerization. Interacts with A.thaliana VIP1 that mediates its translocation to the host nucleus. Forms a complex made of VirE2, host VIP1 and VIP2 and single-stranded DNA (ssDNA).

The protein resides in the secreted. It is found in the host nucleus. In terms of biological role, involved in DNA transformation; mediates the nuclear uptake of single-stranded DNA copies of the transferred DNA (T-DNA) element. Binds single-stranded but not double-stranded DNA regardless of nucleotide sequence composition. This is Single-strand DNA-binding protein (virE2) from Agrobacterium fabrum (strain C58 / ATCC 33970) (Agrobacterium tumefaciens (strain C58)).